The chain runs to 383 residues: Peroxisomal membrane protein PEX15 (383 aa).

Residues 1–331 (MAASEIMNNL…AVLKHHFTRS (331 aa)) lie on the Cytoplasmic side of the membrane. A helical membrane pass occupies residues 332-349 (VLNKNGLLLTGLLLLLCL). The Lumenal portion of the chain corresponds to 350-383 (KKYKSLMAIFKHVPAAFHTVYPQIVGLLKLLASI).

In terms of assembly, interacts with PEX6. Interacts with PEX19; targets PEX15 to the peroxisome. Post-translationally, phosphorylated.

The protein resides in the peroxisome membrane. Its subcellular location is the endoplasmic reticulum membrane. In terms of biological role, peroxisomal docking factor that anchors PEX1 and PEX6 to peroxisome membranes. PEX26 is therefore required for the formation of the PEX1-PEX6 AAA ATPase complex, a complex that mediates the extraction of the PEX5 receptor from peroxisomal membrane. This Saccharomyces cerevisiae (strain ATCC 204508 / S288c) (Baker's yeast) protein is Peroxisomal membrane protein PEX15 (PEX15).